We begin with the raw amino-acid sequence, 1058 residues long: Lon protease homolog, mitochondrial (1058 aa).

The transit peptide at 1 to 47 directs the protein to the mitochondrion; the sequence is MLTRIRNAGVGGNAARRVRLLAGYTGARMAHAAALNSTTGAGGAARA. Residues 72-151 form a disordered region; that stretch reads GGQCILKQDR…RSNPPSEGEV (80 aa). Composition is skewed to basic and acidic residues over residues 78–97 and 106–118; these read KQDREPDQSDDKKVPPRAEE and DEEAERQPREEQA. Over residues 129–142 the composition is skewed to gly residues; sequence GSGGSASSAGGGGR. One can recognise a Lon N-terminal domain in the interval 158–412; it reads LMVLPMSNRP…KALVFIKKEV (255 aa). 564–571 provides a ligand contact to ATP; sequence GPPGVGKT. The segment at 778–814 is disordered; the sequence is TPKSAPAETNIEPENGKPDASAKPLTNNLPAPEPLNI. One can recognise a Lon proteolytic domain in the interval 844–1030; it reads KTPAGVVMGL…DDVFNVLFGS (187 aa). Active-site residues include S936 and K979.

This sequence belongs to the peptidase S16 family. As to quaternary structure, homohexamer or homoheptamer. Organized in a ring with a central cavity.

The protein resides in the mitochondrion matrix. It catalyses the reaction Hydrolysis of proteins in presence of ATP.. ATP-dependent serine protease that mediates the selective degradation of misfolded, unassembled or oxidatively damaged polypeptides as well as certain short-lived regulatory proteins in the mitochondrial matrix. May also have a chaperone function in the assembly of inner membrane protein complexes. Participates in the regulation of mitochondrial gene expression and in the maintenance of the integrity of the mitochondrial genome. Binds to mitochondrial DNA in a site-specific manner. This Eremothecium gossypii (strain ATCC 10895 / CBS 109.51 / FGSC 9923 / NRRL Y-1056) (Yeast) protein is Lon protease homolog, mitochondrial.